A 147-amino-acid chain; its full sequence is METLTAISRWLAKQHVVTWCVQQEGELWCANAFYLFDVQKVAFYILTEEKTRHAQMSGPQAAVAGTVNGQPKTVALIRGVQFKGEIRRLEGEESDLARKAYNRRFPVARMLSAPVWEIRPDEIKFTDNTLGFGKKMIWLRGSGTEQA.

This sequence belongs to the UPF0306 family.

The polypeptide is UPF0306 protein YhbP (Escherichia coli O157:H7).